Reading from the N-terminus, the 434-residue chain is Tol-Pal system protein TolB (434 aa).

A signal peptide spans 1 to 24 (MKFSAYLTTLFIVLFSLFIQTVQA).

This sequence belongs to the TolB family. As to quaternary structure, the Tol-Pal system is composed of five core proteins: the inner membrane proteins TolA, TolQ and TolR, the periplasmic protein TolB and the outer membrane protein Pal. They form a network linking the inner and outer membranes and the peptidoglycan layer.

The protein resides in the periplasm. In terms of biological role, part of the Tol-Pal system, which plays a role in outer membrane invagination during cell division and is important for maintaining outer membrane integrity. This is Tol-Pal system protein TolB from Histophilus somni (strain 2336) (Haemophilus somnus).